The primary structure comprises 593 residues: Aspartate--tRNA ligase (593 aa).

An L-aspartate-binding site is contributed by E180. Positions 204 to 207 (QIFK) are aspartate. R226 is an L-aspartate binding site. ATP is bound by residues 226–228 (RDE) and Q235. H453 contacts L-aspartate. ATP is bound at residue E487. R494 is an L-aspartate binding site. 539–542 (GLDR) is a binding site for ATP.

It belongs to the class-II aminoacyl-tRNA synthetase family. Type 1 subfamily. In terms of assembly, homodimer.

It localises to the cytoplasm. The enzyme catalyses tRNA(Asp) + L-aspartate + ATP = L-aspartyl-tRNA(Asp) + AMP + diphosphate. Catalyzes the attachment of L-aspartate to tRNA(Asp) in a two-step reaction: L-aspartate is first activated by ATP to form Asp-AMP and then transferred to the acceptor end of tRNA(Asp). The chain is Aspartate--tRNA ligase from Clostridium botulinum (strain Okra / Type B1).